Here is a 515-residue protein sequence, read N- to C-terminus: Nuclear hormone receptor family member nhr-62 (515 aa).

The nuclear receptor DNA-binding region spans 95–170; it reads NLVCVVCGDQ…AGMNPRAVQS (76 aa). NR C4-type zinc fingers lie at residues 98–118 and 134–153; these read CVVC…CNGC and CRFE…CRAC. A disordered region spans residues 169-195; the sequence is QSERVEREQNGSPNQIEEDDYKDLSSP. Residues 225–509 form the NR LBD domain; it reads EMAKLSEQIV…YLCHEVQFIQ (285 aa). Residues 498–509 form an AF-2 region; the sequence is SEYLCHEVQFIQ.

This sequence belongs to the nuclear hormone receptor family. As to expression, widely expressed at a low level in many tissues including the pharynx, sensory neurons, intestine, spermatheca, hypodermis, and excretory cell.

Its subcellular location is the nucleus. Functionally, orphan nuclear hormone receptor. Required for metabolic and physiologic responses associated with dietary-restriction-induced longevity. Modulates triglyceride and lipid metabolism and autophagy, associated with dietary-restriction, probably acting via regulation of transcription of target genes. In Caenorhabditis elegans, this protein is Nuclear hormone receptor family member nhr-62 (nhr-62).